We begin with the raw amino-acid sequence, 237 residues long: Phosphatidylserine decarboxylase proenzyme (237 aa).

The Schiff-base intermediate with substrate; via pyruvic acid role is filled by Ser-206. A Pyruvic acid (Ser); by autocatalysis modification is found at Ser-206.

It belongs to the phosphatidylserine decarboxylase family. PSD-A subfamily. In terms of assembly, heterodimer of a large membrane-associated beta subunit and a small pyruvoyl-containing alpha subunit. Pyruvate is required as a cofactor. Post-translationally, is synthesized initially as an inactive proenzyme. Formation of the active enzyme involves a self-maturation process in which the active site pyruvoyl group is generated from an internal serine residue via an autocatalytic post-translational modification. Two non-identical subunits are generated from the proenzyme in this reaction, and the pyruvate is formed at the N-terminus of the alpha chain, which is derived from the carboxyl end of the proenzyme. The post-translation cleavage follows an unusual pathway, termed non-hydrolytic serinolysis, in which the side chain hydroxyl group of the serine supplies its oxygen atom to form the C-terminus of the beta chain, while the remainder of the serine residue undergoes an oxidative deamination to produce ammonia and the pyruvoyl prosthetic group on the alpha chain.

It is found in the cell membrane. The catalysed reaction is a 1,2-diacyl-sn-glycero-3-phospho-L-serine + H(+) = a 1,2-diacyl-sn-glycero-3-phosphoethanolamine + CO2. It participates in phospholipid metabolism; phosphatidylethanolamine biosynthesis; phosphatidylethanolamine from CDP-diacylglycerol: step 2/2. Catalyzes the formation of phosphatidylethanolamine (PtdEtn) from phosphatidylserine (PtdSer). The protein is Phosphatidylserine decarboxylase proenzyme of Nocardia farcinica (strain IFM 10152).